A 638-amino-acid chain; its full sequence is MAAAQGPVAPSSLEQNGAVPSEATKKDQNLKRGNWGNQIEFVLTSVGYAVGLGNVWRFPYLCYRNGGGAFMFPYFIMLIFCGIPLFFMELSFGQFASQGCLGVWRISPMFKGVGYGMMVVSTYIGIYYNVVICIAFYYFFSSMTPVLPWTYCNNPWNTPDCMSVLDNPNITNGSQPPALPGNVSQALNQTLKRTSPSEEYWRLYVLKLSDDIGNFGEVRLPLLGCLGVSWVVVFLCLIRGVKSSGKVVYFTATFPYVVLTILFIRGVTLEGAFTGIMYYLTPQWDKILEAKVWGDAASQIFYSLGCAWGGLVTMASYNKFHNNCYRDSVIISITNCATSVYAGFVIFSILGFMANHLGVDVSRVADHGPGLAFVAYPEALTLLPISPLWSLLFFFMLILLGLGTQFCLLETLVTAIVDEVGNEWILQKKTYVTLGVAVAGFLLGIPLTSQAGIYWLLLMDNYAASFSLVIISCIMCVSIMYIYGHQNYFQDIQMMLGFPPPLFFQICWRFVSPAIIFFILIFSVIQYQPITYNQYQYPSWRVRIGFLMALSSVICIPLYALFQFCRTDGDTLLHRLKNATKPSRDWGPALLEHRTRRYAPTTTPSPEDGLEVQPLHPDKAQIPMVGSNGSSRFQDSRI.

The interval 1–29 (MAAAQGPVAPSSLEQNGAVPSEATKKDQN) is disordered. At 1–40 (MAAAQGPVAPSSLEQNGAVPSEATKKDQNLKRGNWGNQIE) the chain is on the cytoplasmic side. The next 3 helical transmembrane spans lie at 41–61 (FVLT…FPYL), 69–88 (AFMF…LFFM), and 112–132 (GVGY…NVVI). Topologically, residues 133 to 219 (CIAFYYFFSS…DDIGNFGEVR (87 aa)) are extracellular. Asn-169, Asn-172, Asn-182, and Asn-188 each carry an N-linked (GlcNAc...) asparagine glycan. 9 helical membrane passes run 220–238 (LPLL…LCLI), 247–264 (VVYF…ILFI), 300–317 (IFYS…MASY), 329–350 (VIIS…FSIL), 383–402 (LPIS…LLGL), 431–449 (YVTL…PLTS), 465–485 (SFSL…IYGH), 506–525 (ICWR…FSVI), and 544–562 (IGFL…YALF). Topologically, residues 563 to 638 (QFCRTDGDTL…GSSRFQDSRI (76 aa)) are cytoplasmic. The disordered stretch occupies residues 597-638 (RYAPTTTPSPEDGLEVQPLHPDKAQIPMVGSNGSSRFQDSRI). At Thr-603 the chain carries Phosphothreonine. Phosphoserine occurs at positions 605 and 630. The essential for interaction with EXOC1 stretch occupies residues 627–638 (SNGSSRFQDSRI). Over residues 627–638 (SNGSSRFQDSRI) the composition is skewed to polar residues.

The protein belongs to the sodium:neurotransmitter symporter (SNF) (TC 2.A.22) family. SLC6A9 subfamily. In terms of assembly, interacts with EXOC1; interaction increases the transporter capacity of SLC6A9 probably by promoting its insertion into the cell membrane. Interacts with EXOC3 and EXOC4.

It localises to the cell membrane. The catalysed reaction is glycine(out) + chloride(out) + 2 Na(+)(out) = glycine(in) + chloride(in) + 2 Na(+)(in). Sodium- and chloride-dependent glycine transporter which is essential for regulating glycine concentrations at inhibitory glycinergic synapses. The chain is Sodium- and chloride-dependent glycine transporter 1 (SLC6A9) from Bos taurus (Bovine).